The chain runs to 1138 residues: Pesticidal crystal protein Cry7Ab (1138 aa).

This sequence belongs to the delta endotoxin family.

Promotes colloidosmotic lysis by binding to the midgut epithelial cells of Coleoptera. The protein is Pesticidal crystal protein Cry7Ab (cry7Ab) of Bacillus thuringiensis serovar kumamotoensis.